Reading from the N-terminus, the 211-residue chain is Large ribosomal subunit protein uL3 (211 aa).

At glutamine 150 the chain carries N5-methylglutamine.

This sequence belongs to the universal ribosomal protein uL3 family. In terms of assembly, part of the 50S ribosomal subunit. Forms a cluster with proteins L14 and L19. Post-translationally, methylated by PrmB.

Its function is as follows. One of the primary rRNA binding proteins, it binds directly near the 3'-end of the 23S rRNA, where it nucleates assembly of the 50S subunit. The protein is Large ribosomal subunit protein uL3 of Pseudomonas putida (strain GB-1).